The primary structure comprises 462 residues: Glycine--tRNA ligase (462 aa).

Substrate-binding residues include Arg100 and Glu170. ATP is bound by residues 202–204 (RNE), 212–217 (FRTREF), 287–288 (EL), and 331–334 (GVER). 217-221 (FEQME) is a binding site for substrate. A substrate-binding site is contributed by 327–331 (EPSVG).

The protein belongs to the class-II aminoacyl-tRNA synthetase family. Homodimer.

It is found in the cytoplasm. It carries out the reaction tRNA(Gly) + glycine + ATP = glycyl-tRNA(Gly) + AMP + diphosphate. Its function is as follows. Catalyzes the attachment of glycine to tRNA(Gly). This chain is Glycine--tRNA ligase, found in Malacoplasma penetrans (strain HF-2) (Mycoplasma penetrans).